The primary structure comprises 135 residues: Beta-galactoside-binding lectin (135 aa).

Ser-2 carries the post-translational modification N-acetylserine. The cysteines at positions 3 and 8 are disulfide-linked. Residues 5–135 form the Galectin domain; that stretch reads GPVCTNLGLK…DFTLRSVSWE (131 aa). A beta-D-galactoside-binding positions include 46–50, His-54, Asn-63, 70–73, and 70–76; these read HFNPR, WGTE, and WGTEQRE.

In terms of assembly, homodimer; disulfide-linked. (Microbial infection) Interacts with newcastle disease virus protein HN; this interaction inhibits viral adsorption rather than internalization. Mainly in the intestine (adult), mainly in the skin (embryo).

This protein binds beta-galactoside. May participate in host antiviral defense through specific interaction with glycans on the viral envelope glycoproteins. This is Beta-galactoside-binding lectin (CG-1B) from Gallus gallus (Chicken).